We begin with the raw amino-acid sequence, 1064 residues long: Carbamoyl phosphate synthase large chain (1064 aa).

Residues 1–401 (MPKRNDIKKI…SLLKAVRSLE (401 aa)) form a carboxyphosphate synthetic domain region. Residues Arg-129, Arg-169, Gly-175, Gly-176, Glu-208, Ile-210, Glu-215, Gly-241, Val-242, His-243, Gln-284, and Glu-298 each coordinate ATP. The 195-residue stretch at 133–327 (KELCERIGEP…IAKMSAKIAI (195 aa)) folds into the ATP-grasp 1 domain. Mg(2+) contacts are provided by Gln-284, Glu-298, and Asn-300. The Mn(2+) site is built by Gln-284, Glu-298, and Asn-300. The segment at 402 to 546 (IGVFHNDLQE…YSTYEWENES (145 aa)) is oligomerization domain. The segment at 547–929 (KRSSKEKIIV…ALYKSFEAAK (383 aa)) is carbamoyl phosphate synthetic domain. Residues 671–861 (EKALQDLEIP…MAQLATQMIL (191 aa)) form the ATP-grasp 2 domain. Residues Arg-707, Ser-746, Leu-748, Glu-752, Gly-777, Val-778, His-779, Ser-780, Gln-820, and Glu-832 each contribute to the ATP site. Gln-820, Glu-832, and Asn-834 together coordinate Mg(2+). Residues Gln-820, Glu-832, and Asn-834 each coordinate Mn(2+). Positions 930–1064 (LHMADYGSVL…QSRSFTTKNI (135 aa)) constitute an MGS-like domain. Residues 930 to 1064 (LHMADYGSVL…QSRSFTTKNI (135 aa)) form an allosteric domain region.

It belongs to the CarB family. As to quaternary structure, composed of two chains; the small (or glutamine) chain promotes the hydrolysis of glutamine to ammonia, which is used by the large (or ammonia) chain to synthesize carbamoyl phosphate. Tetramer of heterodimers (alpha,beta)4. It depends on Mg(2+) as a cofactor. The cofactor is Mn(2+).

It carries out the reaction hydrogencarbonate + L-glutamine + 2 ATP + H2O = carbamoyl phosphate + L-glutamate + 2 ADP + phosphate + 2 H(+). The catalysed reaction is hydrogencarbonate + NH4(+) + 2 ATP = carbamoyl phosphate + 2 ADP + phosphate + 2 H(+). It functions in the pathway amino-acid biosynthesis; L-arginine biosynthesis; carbamoyl phosphate from bicarbonate: step 1/1. The protein operates within pyrimidine metabolism; UMP biosynthesis via de novo pathway; (S)-dihydroorotate from bicarbonate: step 1/3. Its function is as follows. Large subunit of the glutamine-dependent carbamoyl phosphate synthetase (CPSase). CPSase catalyzes the formation of carbamoyl phosphate from the ammonia moiety of glutamine, carbonate, and phosphate donated by ATP, constituting the first step of 2 biosynthetic pathways, one leading to arginine and/or urea and the other to pyrimidine nucleotides. The large subunit (synthetase) binds the substrates ammonia (free or transferred from glutamine from the small subunit), hydrogencarbonate and ATP and carries out an ATP-coupled ligase reaction, activating hydrogencarbonate by forming carboxy phosphate which reacts with ammonia to form carbamoyl phosphate. The protein is Carbamoyl phosphate synthase large chain of Lactococcus lactis subsp. lactis (strain IL1403) (Streptococcus lactis).